A 292-amino-acid polypeptide reads, in one-letter code: 33 kDa chaperonin (292 aa).

2 cysteine pairs are disulfide-bonded: C230/C232 and C263/C266.

It belongs to the HSP33 family. In terms of processing, under oxidizing conditions two disulfide bonds are formed involving the reactive cysteines. Under reducing conditions zinc is bound to the reactive cysteines and the protein is inactive.

The protein resides in the cytoplasm. In terms of biological role, redox regulated molecular chaperone. Protects both thermally unfolding and oxidatively damaged proteins from irreversible aggregation. Plays an important role in the bacterial defense system toward oxidative stress. This Salmonella paratyphi A (strain ATCC 9150 / SARB42) protein is 33 kDa chaperonin.